The primary structure comprises 417 residues: Serine--tRNA ligase (417 aa).

226-228 lines the L-serine pocket; that stretch reads TSE. ATP-binding positions include 257–259 and V273; that span reads RRE. E280 is a binding site for L-serine. Residue 344–347 participates in ATP binding; that stretch reads ELTS. T379 is a binding site for L-serine.

The protein belongs to the class-II aminoacyl-tRNA synthetase family. Type-1 seryl-tRNA synthetase subfamily. Homodimer. The tRNA molecule binds across the dimer.

It localises to the cytoplasm. The enzyme catalyses tRNA(Ser) + L-serine + ATP = L-seryl-tRNA(Ser) + AMP + diphosphate + H(+). It carries out the reaction tRNA(Sec) + L-serine + ATP = L-seryl-tRNA(Sec) + AMP + diphosphate + H(+). Its pathway is aminoacyl-tRNA biosynthesis; selenocysteinyl-tRNA(Sec) biosynthesis; L-seryl-tRNA(Sec) from L-serine and tRNA(Sec): step 1/1. Catalyzes the attachment of serine to tRNA(Ser). Is also able to aminoacylate tRNA(Sec) with serine, to form the misacylated tRNA L-seryl-tRNA(Sec), which will be further converted into selenocysteinyl-tRNA(Sec). This is Serine--tRNA ligase from Mycolicibacterium smegmatis (strain ATCC 700084 / mc(2)155) (Mycobacterium smegmatis).